The chain runs to 874 residues: Chaperone protein ClpB 1 (874 aa).

The Clp R domain occupies 6-148; that stretch reads PNQFTEKAWE…RQIIQQIRGS (143 aa). Repeat stretches follow at residues 9-73 and 85-148; these read FTEK…IARQ and LGRS…IRGS. Positions 161–342 are NBD1; the sequence is EALEKYGRDL…RRFQQVFVDQ (182 aa). Residue 208–215 coordinates ATP; the sequence is GEPGVGKT. The linker stretch occupies residues 343 to 551; it reads PTVEDTISIL…IAEIISKWTG (209 aa). Positions 393–527 form a coiled coil; that stretch reads IDLVDESAAR…MEGGLATTHT (135 aa). The interval 561–772 is NBD2; it reads EMQKLLNLDE…RVDETIIFHS (212 aa). ATP is bound at residue 611-618; that stretch reads GPTGVGKT. The interval 773 to 874 is C-terminal; sequence LRKDQLQQIV…IATPTAVPLS (102 aa).

This sequence belongs to the ClpA/ClpB family. Homohexamer. The oligomerization is ATP-dependent.

It is found in the cytoplasm. Part of a stress-induced multi-chaperone system, it is involved in the recovery of the cell from heat-induced damage, in cooperation with DnaK, DnaJ and GrpE. Acts before DnaK, in the processing of protein aggregates. Protein binding stimulates the ATPase activity; ATP hydrolysis unfolds the denatured protein aggregates, which probably helps expose new hydrophobic binding sites on the surface of ClpB-bound aggregates, contributing to the solubilization and refolding of denatured protein aggregates by DnaK. Necessary for thermotolerance. This is Chaperone protein ClpB 1 (clpB1) from Synechococcus elongatus (strain ATCC 33912 / PCC 7942 / FACHB-805) (Anacystis nidulans R2).